Here is a 181-residue protein sequence, read N- to C-terminus: S-fimbrial protein subunit SfaA (181 aa).

The N-terminal stretch at 1 to 24 (MKLKFISMAVFSALTLGVATNASA) is a signal peptide. A disulfide bond links Cys44 and Cys84.

It belongs to the fimbrial protein family.

Its subcellular location is the fimbrium. Fimbriae (also called pili), polar filaments radiating from the surface of the bacterium to a length of 0.5-1.5 micrometers and numbering 100-300 per cell, enable bacteria to colonize the epithelium of specific host organs. In terms of biological role, the major fimbrial subunit. Interacts with alpha-sialic acid-(2-3)-beta-Gal containing receptors. It belongs to the group of Mrh (Mannose-resistant hemagglutination) fimbrial proteins. The sequence is that of S-fimbrial protein subunit SfaA (sfaA) from Escherichia coli O6:K15:H31 (strain 536 / UPEC).